The chain runs to 100 residues: Urease subunit gamma (100 aa).

Belongs to the urease gamma subunit family. Heterotrimer of UreA (gamma), UreB (beta) and UreC (alpha) subunits. Three heterotrimers associate to form the active enzyme.

Its subcellular location is the cytoplasm. The catalysed reaction is urea + 2 H2O + H(+) = hydrogencarbonate + 2 NH4(+). The protein operates within nitrogen metabolism; urea degradation; CO(2) and NH(3) from urea (urease route): step 1/1. Its function is as follows. Expression of the urease operon increases the likelihood of bacterial survival by contributing to acid resistance in vitro and in vivo in BALB/c mice. Y.enterocolitica enters the body via an oral path and must survive the acidic stomach before being able to colonize the intestinal mucosa. In Yersinia enterocolitica, this protein is Urease subunit gamma.